The sequence spans 442 residues: Chitinase-like protein Idgf4 (442 aa).

The N-terminal stretch at 1-21 (MKLYALFSLLVGSLAIGQISA) is a signal peptide. Residues 25–442 (HHLLCYYDGN…PILRQVKSKL (418 aa)) form the GH18 domain. Residues C29 and C56 are joined by a disulfide bond. A glycan (N-linked (GlcNAc...) asparagine) is linked at N224. C343 and C426 are oxidised to a cystine.

This sequence belongs to the glycosyl hydrolase 18 family. IDGF subfamily. In terms of processing, glycosylated. As to expression, primarily expressed in yolk cells and fat body. In larvae, it is expressed in the imaginal ring, the salivary duct, large salivary gland cells and weakly expressed in imaginal disks. More strongly expressed than Idgf1 and Idgf3.

The protein resides in the secreted. Cooperates with insulin-like peptides to stimulate the proliferation, polarization and motility of imaginal disk cells. May act by stabilizing the binding of insulin-like peptides to its receptor through a simultaneous interaction with both molecules to form a multiprotein signaling complex. The polypeptide is Chitinase-like protein Idgf4 (Idgf4) (Drosophila melanogaster (Fruit fly)).